We begin with the raw amino-acid sequence, 122 residues long: Large ribosomal subunit protein bL12 (122 aa).

Belongs to the bacterial ribosomal protein bL12 family. In terms of assembly, homodimer. Part of the ribosomal stalk of the 50S ribosomal subunit. Forms a multimeric L10(L12)X complex, where L10 forms an elongated spine to which 2 to 4 L12 dimers bind in a sequential fashion. Binds GTP-bound translation factors.

Its function is as follows. Forms part of the ribosomal stalk which helps the ribosome interact with GTP-bound translation factors. Is thus essential for accurate translation. This Vibrio campbellii (strain ATCC BAA-1116) protein is Large ribosomal subunit protein bL12.